We begin with the raw amino-acid sequence, 131 residues long: C-type natriuretic peptide 2 (131 aa).

An N-terminal signal peptide occupies residues 1–22; sequence MLYPALLCAALLLIAPLGHTEG. The propeptide occupies 23 to 109; sequence RTLYPSPDAI…KRAVTDRSRR (87 aa). The cysteines at positions 115 and 131 are disulfide-linked.

The protein belongs to the natriuretic peptide family. Expressed in brain and to a low extent in atrium.

Its subcellular location is the secreted. Its function is as follows. Exhibits natriuretic and vasodepressor activity. Has a cGMP-stimulating activity. The chain is C-type natriuretic peptide 2 from Oncorhynchus mykiss (Rainbow trout).